Consider the following 48-residue polypeptide: Mating-type pheromone BAP1(2) (48 aa).

Cysteine methyl ester is present on Cys-45. A lipid anchor (S-farnesyl cysteine) is attached at Cys-45. Positions 46-48 are cleaved as a propeptide — removed in mature form; sequence VRG.

Its subcellular location is the cell membrane. Its function is as follows. Activates B-regulated development. This Schizophyllum commune (Split gill fungus) protein is Mating-type pheromone BAP1(2) (BAP1(2)).